Reading from the N-terminus, the 146-residue chain is Globin-2B (146 aa).

In terms of domain architecture, Globin spans 9–146; that stretch reads QLTADVKKDL…KLVGVVQAAL (138 aa). Heme b is bound at residue H101.

It belongs to the globin family. In terms of assembly, homodimer.

This is Globin-2B from Anadara trapezia (Sydney cockle).